Here is a 273-residue protein sequence, read N- to C-terminus: Ribosomal RNA small subunit methyltransferase A (273 aa).

S-adenosyl-L-methionine is bound by residues Asn-18, Leu-20, Gly-45, Glu-66, Asp-91, and Asn-113.

It belongs to the class I-like SAM-binding methyltransferase superfamily. rRNA adenine N(6)-methyltransferase family. RsmA subfamily.

It localises to the cytoplasm. The enzyme catalyses adenosine(1518)/adenosine(1519) in 16S rRNA + 4 S-adenosyl-L-methionine = N(6)-dimethyladenosine(1518)/N(6)-dimethyladenosine(1519) in 16S rRNA + 4 S-adenosyl-L-homocysteine + 4 H(+). In terms of biological role, specifically dimethylates two adjacent adenosines (A1518 and A1519) in the loop of a conserved hairpin near the 3'-end of 16S rRNA in the 30S particle. May play a critical role in biogenesis of 30S subunits. The polypeptide is Ribosomal RNA small subunit methyltransferase A (Escherichia coli (strain 55989 / EAEC)).